We begin with the raw amino-acid sequence, 257 residues long: Receptor expression-enhancing protein 4 (257 aa).

Transmembrane regions (helical) follow at residues 1 to 21 and 42 to 62; these read MVSW…YPAY and WIVF…ISWF. Ser152 and Ser194 each carry phosphoserine. The disordered stretch occupies residues 159-257; the sequence is IPDTSAPTYQ…KKTIPSDLDS (99 aa). At Thr196 the chain carries Phosphothreonine. The residue at position 202 (Ser202) is a Phosphoserine. Position 250 is a phosphothreonine (Thr250). The residue at position 253 (Ser253) is a Phosphoserine.

This sequence belongs to the DP1 family.

The protein resides in the endoplasmic reticulum membrane. Microtubule-binding protein required to ensure proper cell division and nuclear envelope reassembly by sequestering the endoplasmic reticulum away from chromosomes during mitosis. Probably acts by clearing the endoplasmic reticulum membrane from metaphase chromosomes. The sequence is that of Receptor expression-enhancing protein 4 (Reep4) from Rattus norvegicus (Rat).